A 734-amino-acid chain; its full sequence is Platelet glycoprotein Ib alpha chain (734 aa).

Positions 1–16 are cleaved as a signal peptide; sequence MALLILLFLLPSPLHS. Residues 17-47 form the LRRNT domain; sequence QHTCSISKVTSLLEVNCENKKLTALPADLPA. Topologically, residues 17-612 are extracellular; that stretch reads QHTCSISKVT…LNSDFCCFLP (596 aa). Cys20 and Cys33 are joined by a disulfide. LRR repeat units lie at residues 48 to 69, 72 to 93, 94 to 115, 117 to 140, 141 to 162, 165 to 188, and 189 to 210; these read DTGI…SLVH, HLTY…GKLI, KLEN…GWAL, ALTT…DGLS, QLQE…LLLP, KLKK…DGLE, and DLDT…FFGT. One can recognise an LRRCT domain in the interval 221–282; the sequence is NSWYCDCEIL…YSYPGKGCPT (62 aa). 2 cysteine pairs are disulfide-bonded: Cys225–Cys264 and Cys227–Cys280. A Sulfotyrosine modification is found at Tyr292. O-linked (GalNAc...) threonine glycosylation is found at Thr301, Thr311, Thr315, and Thr316. Ser335 carries O-linked (GalNAc...) serine glycosylation. Residues Thr339, Thr348, Thr358, and Thr377 are each glycosylated (O-linked (GalNAc...) threonine). O-linked (GalNAc...) serine glycosylation occurs at Ser382. 3 O-linked (GalNAc...) threonine glycosylation sites follow: Thr384, Thr385, and Thr405. Disordered stretches follow at residues 406 to 429 and 460 to 526; these read STLT…TPEH and EPST…PEPS. O-linked (GalNAc...) threonine glycosylation is found at Thr512, Thr516, Thr519, Thr530, Thr542, Thr546, Thr550, and Thr562. A glycan (O-linked (GalNAc...) serine) is linked at Ser572. An O-linked (GalNAc...) threonine glycan is attached at Thr573. The helical transmembrane segment at 613-633 threads the bilayer; sequence LGFYVLGLLWLLFASVVLILL. Residues 634–734 lie on the Cytoplasmic side of the membrane; sequence LTWTWHVTPH…VGIRYSGHSL (101 aa). Ser711 and Ser714 each carry phosphoserine.

Two GP-Ib beta are disulfide-linked to one GP-Ib alpha. GP-IX is complexed with the GP-Ib heterodimer via a non covalent linkage. Interacts with FLNB. Interacts with FLNA (via filamin repeats 4, 9, 12, 17, 19, 21, and 23). Post-translationally, O-glycosylated. In terms of processing, glycocalicin is the product of a proteolytic cleavage/shedding, catalyzed by ADAM17, which releases most of the extracellular domain. Binding sites for vWF and thrombin are in this part of the protein.

It localises to the membrane. GP-Ib, a surface membrane protein of platelets, participates in the formation of platelet plugs by binding to the A1 domain of vWF, which is already bound to the subendothelium. The sequence is that of Platelet glycoprotein Ib alpha chain (Gp1ba) from Mus musculus (Mouse).